A 313-amino-acid polypeptide reads, in one-letter code: uncharacterized protein (313 aa).

2 disordered regions span residues 24-53 and 190-291; these read EEGE…PTPN and TALS…PCAR. The span at 211-229 shows a compositional bias: polar residues; it reads TQNYVLKLQLSSPNSQPMS. Low complexity predominate over residues 239 to 260; the sequence is SCSSSNCSSSSSSSACSSVSIS. Over residues 261-284 the composition is skewed to polar residues; that stretch reads DPNNITAYETNNVNPQFPSNQPLD.

This is an uncharacterized protein from Saccharomyces cerevisiae (strain ATCC 204508 / S288c) (Baker's yeast).